We begin with the raw amino-acid sequence, 565 residues long: MTAYIQRSQCISTSLLVVLTTLVSCQIPRDRLSNIGVIVDEGKSLKIAGSHESRYIVLSLVPGVDLENGCGTAQVIQYKSLLNRLLIPLRDALDLQEALITVTNDTTQNAGVPQSRFFGAVIGTIALGVATSAQITAGIALAEAREAKRDIALIKESMTKTHKSVELLQNAVGEQILALKTLQDFVNDEIKPAISELGCETAALRLGIKLTQHYFGLLTAFGSNFGTIGEKSRTLQALSSLYSANITEIMTTIRTGQSNIYDVIYTEQIKGTVIDVDLERYMVTLSVKIPILSEVPGVLIHKASSISYNIDGEEWYVTVPSHILSRASFLGGADITDCVESRLTYICPRDPAQLIPDSQQKCILGDTTRCPVTKVVDSLIPKFAFVNGGVVANRIASTCTCGTGRRPISQDRSKGVAFLTHDNCGLIGVNGVELYANRRGHDATWGVQNLTVGPAIAIRPVDISLNLADATNFLQDSKAELEKARKILSEVGRWYNSRETVITIIVVMVVILVVIIVIVIVLYRLKRSMLMGNPDERIPRDTYTLEPKIRHMYTNGGFDAMAEKR.

Positions 1–25 are cleaved as a signal peptide; the sequence is MTAYIQRSQCISTSLLVVLTTLVSC. Over 26-500 the chain is Extracellular; sequence QIPRDRLSNI…VGRWYNSRET (475 aa). Cysteines 70 and 199 form a disulfide. The N-linked (GlcNAc...) asparagine; by host glycan is linked to Asn104. The fusion peptide stretch occupies residues 117 to 141; it reads FFGAVIGTIALGVATSAQITAGIAL. The stretch at 142 to 170 forms a coiled coil; that stretch reads AEAREAKRDIALIKESMTKTHKSVELLQN. A glycan (N-linked (GlcNAc...) asparagine; by host) is linked at Asn245. A leucine-zipper region spans residues 278–306; that stretch reads LERYMVTLSVKIPILSEVPGVLIHKASSI. 3 disulfide bridges follow: Cys338–Cys347, Cys362–Cys370, and Cys401–Cys424. Asn449 is a glycosylation site (N-linked (GlcNAc...) asparagine; by host). Residues 466 to 491 adopt a coiled-coil conformation; the sequence is NLADATNFLQDSKAELEKARKILSEV. A helical membrane pass occupies residues 501-521; sequence VITIIVVMVVILVVIIVIVIV. At 522-565 the chain is on the cytoplasmic side; that stretch reads LYRLKRSMLMGNPDERIPRDTYTLEPKIRHMYTNGGFDAMAEKR.

Belongs to the paramyxoviruses fusion glycoprotein family. In terms of assembly, homotrimer of disulfide-linked F1-F2. Interacts with HN and M proteins. In natural infection, inactive F0 is matured into F1 and F2 outside the cell by one or more trypsin-like, arginine-specific endoprotease secreted by the bronchial epithelial cells. One identified protease that may be involved in this process is tryptase Clara. Unlike most paramyxoviruses, Sendai F0 processing occurs on the cell surface and induces a conformational change in the protein that unmasks the fusion peptide. F0 maturation is a primary determinant for organ tropism and pathogenicity. F1 and F2 display interchain and intrachain disulfide bonds, that are necessary for correct folding and intracellular transport. Post-translationally, N-glycosylated; glycans consist of a mixture of high mannose-type oligosaccharides and of complex-type oligosaccharides. Glycosylation at Asn-245 is essential for membrane localization and F0 cleavage.

It localises to the virion membrane. The protein resides in the host cell membrane. Functionally, class I viral fusion protein. Under the current model, the protein has at least 3 conformational states: pre-fusion native state, pre-hairpin intermediate state, and post-fusion hairpin state. During viral and plasma cell membrane fusion, the heptad repeat (HR) regions assume a trimer-of-hairpins structure, positioning the fusion peptide in close proximity to the C-terminal region of the ectodomain. The formation of this structure appears to drive apposition and subsequent fusion of viral and plasma cell membranes. Directs fusion of viral and cellular membranes leading to delivery of the nucleocapsid into the cytoplasm. This fusion is pH independent and occurs directly at the outer cell membrane. The trimer of F1-F2 (F protein) interacts with HN tetramer at the virion surface. Upon HN binding to its cellular receptor, the hydrophobic fusion peptide is unmasked and interacts with the cellular membrane, inducing the fusion between cell and virion membranes. Later in infection, F proteins expressed at the plasma membrane of infected cells could mediate fusion with adjacent cells to form syncytia, a cytopathic effect that could lead to tissue necrosis. The polypeptide is Fusion glycoprotein F0 (F) (Cavia cutleri (Guinea pig)).